The following is a 567-amino-acid chain: TGF-beta receptor type-2 (567 aa).

Residues 1–22 (MGRGLLRGLWPLHIVLWTRIAS) form the signal peptide. Residues 23 to 166 (TIPPHVQKSV…NPDLLLVIFQ (144 aa)) are Extracellular-facing. 6 disulfides stabilise this stretch: Cys-51/Cys-84, Cys-54/Cys-71, Cys-61/Cys-67, Cys-77/Cys-101, Cys-121/Cys-136, and Cys-138/Cys-143. Residues Asn-70 and Asn-94 are each glycosylated (N-linked (GlcNAc...) asparagine). A glycan (N-linked (GlcNAc...) asparagine) is linked at Asn-154. Residues 167–187 (VTGISLLPPLGVAISVIIIFY) form a helical membrane-spanning segment. At 188-567 (CYRVNRQQKL…PEDGSLNTTK (380 aa)) the chain is on the cytoplasmic side. Positions 244–544 (IELDTLVGKG…AERFSELEHL (301 aa)) constitute a Protein kinase domain. Residues 250 to 258 (VGKGRFAEV) and Lys-277 each bind ATP. The active-site Proton acceptor is Asp-379. 3 positions are modified to phosphoserine: Ser-409, Ser-548, and Ser-553. The interval 439–567 (VESFKQTDVY…PEDGSLNTTK (129 aa)) is sufficient for interaction with CLU.

This sequence belongs to the protein kinase superfamily. TKL Ser/Thr protein kinase family. TGFB receptor subfamily. Homodimer. Heterohexamer; TGFB1, TGFB2 and TGFB3 homodimeric ligands assemble a functional receptor composed of two TGFBR1 and TGFBR2 heterodimers to form a ligand-receptor heterohexamer. The respective affinity of TGFRB1 and TGFRB2 for the ligands may modulate the kinetics of assembly of the receptor and may explain the different biological activities of TGFB1, TGFB2 and TGFB3. Component of a complex composed of TSC22D1 (via N-terminus), TGFBR1 and TGFBR2; the interaction between TSC22D1 and TGFBR1 is inhibited by SMAD7 and promoted by TGFB1. Interacts with DAXX. Interacts with DYNLT4. Interacts with ZFYVE9; ZFYVE9 recruits SMAD2 and SMAD3 to the TGF-beta receptor. Interacts with and is activated by SCUBE3; this interaction does not affect TGFB1-binding to TGFBR2. Interacts with VPS39; this interaction is independent of the receptor kinase activity and of the presence of TGF-beta. Interacts with CLU. As to quaternary structure, homodimer; disulfide-linked. Requires Mg(2+) as cofactor. It depends on Mn(2+) as a cofactor. In terms of processing, phosphorylated on a Ser/Thr residue in the cytoplasmic domain.

It is found in the cell membrane. Its subcellular location is the membrane raft. It localises to the secreted. The catalysed reaction is L-threonyl-[receptor-protein] + ATP = O-phospho-L-threonyl-[receptor-protein] + ADP + H(+). The enzyme catalyses L-seryl-[receptor-protein] + ATP = O-phospho-L-seryl-[receptor-protein] + ADP + H(+). In terms of biological role, transmembrane serine/threonine kinase forming with the TGF-beta type I serine/threonine kinase receptor, TGFBR1, the non-promiscuous receptor for the TGF-beta cytokines TGFB1, TGFB2 and TGFB3. Transduces the TGFB1, TGFB2 and TGFB3 signal from the cell surface to the cytoplasm and thus regulates a plethora of physiological and pathological processes including cell cycle arrest in epithelial and hematopoietic cells, control of mesenchymal cell proliferation and differentiation, wound healing, extracellular matrix production, immunosuppression and carcinogenesis. The formation of the receptor complex composed of 2 TGFBR1 and 2 TGFBR2 molecules symmetrically bound to the cytokine dimer results in the phosphorylation and activation of TGFBR1 by the constitutively active TGFBR2. Activated TGFBR1 phosphorylates SMAD2 which dissociates from the receptor and interacts with SMAD4. The SMAD2-SMAD4 complex is subsequently translocated to the nucleus where it modulates the transcription of the TGF-beta-regulated genes. This constitutes the canonical SMAD-dependent TGF-beta signaling cascade. Also involved in non-canonical, SMAD-independent TGF-beta signaling pathways. Its function is as follows. Has transforming growth factor beta-activated receptor activity. Functionally, binds TGFB1, TGFB2 and TGFB3 in the picomolar affinity range without the participation of additional receptors. Blocks activation of SMAD2 and SMAD3 by TGFB1. This Homo sapiens (Human) protein is TGF-beta receptor type-2 (TGFBR2).